A 420-amino-acid chain; its full sequence is Light-independent protochlorophyllide reductase subunit N (420 aa).

Residues C21, C46, and C103 each contribute to the [4Fe-4S] cluster site.

Belongs to the BchN/ChlN family. In terms of assembly, protochlorophyllide reductase is composed of three subunits; BchL, BchN and BchB. Forms a heterotetramer of two BchB and two BchN subunits. It depends on [4Fe-4S] cluster as a cofactor.

It catalyses the reaction chlorophyllide a + oxidized 2[4Fe-4S]-[ferredoxin] + 2 ADP + 2 phosphate = protochlorophyllide a + reduced 2[4Fe-4S]-[ferredoxin] + 2 ATP + 2 H2O. Its pathway is porphyrin-containing compound metabolism; bacteriochlorophyll biosynthesis (light-independent). Functionally, component of the dark-operative protochlorophyllide reductase (DPOR) that uses Mg-ATP and reduced ferredoxin to reduce ring D of protochlorophyllide (Pchlide) to form chlorophyllide a (Chlide). This reaction is light-independent. The NB-protein (BchN-BchB) is the catalytic component of the complex. The sequence is that of Light-independent protochlorophyllide reductase subunit N from Chlorobium luteolum (strain DSM 273 / BCRC 81028 / 2530) (Pelodictyon luteolum).